The primary structure comprises 801 residues: Probable inorganic carbon transporter subunit DabA (801 aa).

4 residues coordinate Zn(2+): Cys-332, Asp-334, His-500, and Cys-515.

This sequence belongs to the inorganic carbon transporter (TC 9.A.2) DabA family. Forms a complex with DabB. Requires Zn(2+) as cofactor.

Its subcellular location is the cell inner membrane. Functionally, part of an energy-coupled inorganic carbon pump. The polypeptide is Probable inorganic carbon transporter subunit DabA (Marinobacter nauticus (strain ATCC 700491 / DSM 11845 / VT8) (Marinobacter aquaeolei)).